Here is a 244-residue protein sequence, read N- to C-terminus: Mono-ADP-ribosyltransferase C3 (244 aa).

A signal peptide spans 1-40 (MKGIRKSILCLVLSAGVIAPVTTSIVQSPQKCYACTVDKG). The region spanning 44-244 (DTFTEFTNVE…QIMITAMIFK (201 aa)) is the TR mART core domain. NAD(+) is bound by residues Thr80, Asn87, Arg91, 128–131 (RGDD), and 167–169 (RTE). Arg128 is a catalytic residue. The active site involves Ser174. Residues 182-185 (FGGR) and 211-213 (QLE) contribute to the NAD(+) site. The active site involves Glu213.

To exoenzymes 3 of C.limosum and C.botulinum D phage, and to S.aureus ediN. Monomer.

The protein resides in the secreted. The catalysed reaction is L-asparaginyl-[protein] + NAD(+) = N(4)-(ADP-D-ribosyl)-L-asparaginyl-[protein] + nicotinamide + H(+). ADP-ribosylates eukaryotic Rho and Rac proteins on an asparagine residue. The sequence is that of Mono-ADP-ribosyltransferase C3 from Clostridium botulinum C phage (Clostridium botulinum C bacteriophage).